We begin with the raw amino-acid sequence, 145 residues long: D-aminoacyl-tRNA deacylase (145 aa).

Positions 137 to 138 (GP) match the Gly-cisPro motif, important for rejection of L-amino acids motif.

It belongs to the DTD family. As to quaternary structure, homodimer.

It is found in the cytoplasm. The catalysed reaction is glycyl-tRNA(Ala) + H2O = tRNA(Ala) + glycine + H(+). It carries out the reaction a D-aminoacyl-tRNA + H2O = a tRNA + a D-alpha-amino acid + H(+). Its function is as follows. An aminoacyl-tRNA editing enzyme that deacylates mischarged D-aminoacyl-tRNAs. Also deacylates mischarged glycyl-tRNA(Ala), protecting cells against glycine mischarging by AlaRS. Acts via tRNA-based rather than protein-based catalysis; rejects L-amino acids rather than detecting D-amino acids in the active site. By recycling D-aminoacyl-tRNA to D-amino acids and free tRNA molecules, this enzyme counteracts the toxicity associated with the formation of D-aminoacyl-tRNA entities in vivo and helps enforce protein L-homochirality. The sequence is that of D-aminoacyl-tRNA deacylase from Ruegeria pomeroyi (strain ATCC 700808 / DSM 15171 / DSS-3) (Silicibacter pomeroyi).